Here is a 185-residue protein sequence, read N- to C-terminus: MIDVGDLRKGDMIVYQNEMYRVIEANKHFMGRGSGLIRTRLKSVITGLIKEVSFSSGEKVEEADISFRKAQYLYNDGDHYYFMLLDTYEQYSLPAQELEDEKFYLTENLEVDLIFFNGNPVSIQLPTVVVLTVIDTEPNFKGNTVSGGGKPATLETGLKTTVPFFVERGQKIKVDTRTGDYLERA.

It belongs to the elongation factor P family.

It is found in the cytoplasm. The protein operates within protein biosynthesis; polypeptide chain elongation. Functionally, involved in peptide bond synthesis. Stimulates efficient translation and peptide-bond synthesis on native or reconstituted 70S ribosomes in vitro. Probably functions indirectly by altering the affinity of the ribosome for aminoacyl-tRNA, thus increasing their reactivity as acceptors for peptidyl transferase. In Petrotoga mobilis (strain DSM 10674 / SJ95), this protein is Elongation factor P.